We begin with the raw amino-acid sequence, 113 residues long: MKGADAEARAAAWLASLGREVVARNYRIPGGEIDLVSRDGDVLVFTEVRQRHSSRFGTAAESVTPRKLALMRRAALAYLSREHGREDLPCRLEVLTIDGPADRGTLTLLPLDG.

This sequence belongs to the UPF0102 family.

This Deinococcus geothermalis (strain DSM 11300 / CIP 105573 / AG-3a) protein is UPF0102 protein Dgeo_1894.